The sequence spans 122 residues: Large ribosomal subunit protein uL14 (122 aa).

Belongs to the universal ribosomal protein uL14 family. Part of the 50S ribosomal subunit. Forms a cluster with proteins L3 and L19. In the 70S ribosome, L14 and L19 interact and together make contacts with the 16S rRNA in bridges B5 and B8.

Its function is as follows. Binds to 23S rRNA. Forms part of two intersubunit bridges in the 70S ribosome. The chain is Large ribosomal subunit protein uL14 from Ectopseudomonas mendocina (strain ymp) (Pseudomonas mendocina).